The chain runs to 838 residues: E3 ubiquitin-protein ligase RNF19A (838 aa).

The interval 128 to 351 (DFIECPLCLL…LSPSGCTFWG (224 aa)) is TRIAD supradomain. Zn(2+)-binding residues include cysteine 132, cysteine 135, cysteine 150, histidine 152, cysteine 155, cysteine 158, cysteine 176, cysteine 179, cysteine 219, cysteine 224, cysteine 241, cysteine 246, cysteine 251, cysteine 254, histidine 259, cysteine 264, cysteine 301, and cysteine 304. The RING-type 1 zinc-finger motif lies at 132–179 (CPLCLLRHSKDRFPEIMTCHHRSCVDCLRQYLRIEISESRVNISCPEC). The segment at 199–264 (EKYEEFMLRR…KQIWHPNQTC (66 aa)) adopts an IBR-type zinc-finger fold. The RING-type 2; atypical zinc-finger motif lies at 301–332 (CPRCAAYIIKMNDGSCNHMTCAVCGCEFCWLC). Residue cysteine 316 is part of the active site. Zn(2+) contacts are provided by cysteine 321, cysteine 324, cysteine 329, cysteine 332, histidine 340, and cysteine 347. 2 helical membrane-spanning segments follow: residues 368 to 388 (LVGAPVGIALIAGIAIPAMII) and 424 to 444 (VIVSPVVAAVTVGIGVPIMLA). Disordered stretches follow at residues 622 to 685 (SKPS…SNMK) and 700 to 721 (QQSTNSSEFEAPSLSDSMPSVA). Serine 631 carries the post-translational modification Phosphoserine. Over residues 631–644 (SGSSSVDDGSAARS) the composition is skewed to low complexity. The tract at residues 660-838 (ATKWSKEATA…ELKVAIQTDI (179 aa)) is interaction with CASR. Positions 671 to 683 (KKSKSGKLRKKSN) are enriched in basic residues. Polar residues predominate over residues 700–717 (QQSTNSSEFEAPSLSDSM).

This sequence belongs to the RBR family. RNF19 subfamily. Interacts with UBE2L3 and UBE2L6. Also interacts with transcription factor Sp1. Interacts with SNCAIP, CASR and VCP.

It localises to the membrane. The protein localises to the cytoplasm. Its subcellular location is the cytoskeleton. It is found in the microtubule organizing center. The protein resides in the centrosome. It carries out the reaction [E2 ubiquitin-conjugating enzyme]-S-ubiquitinyl-L-cysteine + [acceptor protein]-L-lysine = [E2 ubiquitin-conjugating enzyme]-L-cysteine + [acceptor protein]-N(6)-ubiquitinyl-L-lysine.. It participates in protein modification; protein ubiquitination. Functionally, E3 ubiquitin-protein ligase which accepts ubiquitin from E2 ubiquitin-conjugating enzymes UBE2L3 and UBE2L6 in the form of a thioester and then directly transfers the ubiquitin to targeted substrates, such as SNCAIP or CASR. This chain is E3 ubiquitin-protein ligase RNF19A (RNF19A), found in Sus scrofa (Pig).